Consider the following 178-residue polypeptide: Large ribosomal subunit protein uL6 (178 aa).

Belongs to the universal ribosomal protein uL6 family. In terms of assembly, part of the 50S ribosomal subunit.

Its function is as follows. This protein binds to the 23S rRNA, and is important in its secondary structure. It is located near the subunit interface in the base of the L7/L12 stalk, and near the tRNA binding site of the peptidyltransferase center. The sequence is that of Large ribosomal subunit protein uL6 from Buchnera aphidicola subsp. Acyrthosiphon pisum (strain APS) (Acyrthosiphon pisum symbiotic bacterium).